The chain runs to 421 residues: ATP-dependent RNA helicase RhlB (421 aa).

Residues 9-37 carry the Q motif motif; that stretch reads QKFSDFSLHPKVVEALEKKGFHNCTPIQA. A Helicase ATP-binding domain is found at 40–219; that stretch reads LPLTLAGRDV…FEQMNNAEYI (180 aa). Residue 53-60 coordinates ATP; that stretch reads AQTGTGKT. The DEAD box signature appears at 165–168; that stretch reads DEAD. One can recognise a Helicase C-terminal domain in the interval 245–390; sequence RLLQTLIEEE…VSKYNPDALM (146 aa). Residues 392–421 form a disordered region; that stretch reads DLPKPLRLTRPRTGNGPRRTGAPRNRRRSG. Residues 402–414 are compositionally biased toward low complexity; sequence PRTGNGPRRTGAP.

It belongs to the DEAD box helicase family. RhlB subfamily. As to quaternary structure, component of the RNA degradosome, which is a multiprotein complex involved in RNA processing and mRNA degradation.

It localises to the cytoplasm. It carries out the reaction ATP + H2O = ADP + phosphate + H(+). Functionally, DEAD-box RNA helicase involved in RNA degradation. Has RNA-dependent ATPase activity and unwinds double-stranded RNA. The chain is ATP-dependent RNA helicase RhlB from Shigella dysenteriae serotype 1 (strain Sd197).